The primary structure comprises 292 residues: MSEEQTGIEVAVVSGLSGAGRSTAAKCLEDLGWFVVDNLPPELIATMVELGARSSGAITRVAVVMDVRSRAFTEDLGSVIKDLDARGYKPKVLFLEATDEVLIRRFEQVRRGHPLQGEGRLADGIAAERSLLSRLRSEADLVLDTTALSVHQLRAKIEDAFGTEASTRTRVTVLSFGYKYGLPMDADLVMDCRFLPNPFWIPELREFNGLDEEVRNYVLGQEGAEEFLVNYQQLLRLVGAGYHREGKRYLTLALGCTGGKHRSVALVEELARRLADDEGMMVKTVHRDLGRE.

15 to 22 (GLSGAGRS) is a binding site for ATP. 66-69 (DVRS) contacts GTP.

The protein belongs to the RapZ-like family.

Functionally, displays ATPase and GTPase activities. The polypeptide is Nucleotide-binding protein SACE_2139 (Saccharopolyspora erythraea (strain ATCC 11635 / DSM 40517 / JCM 4748 / NBRC 13426 / NCIMB 8594 / NRRL 2338)).